Consider the following 479-residue polypeptide: Aspartyl/glutamyl-tRNA(Asn/Gln) amidotransferase subunit B (479 aa).

This sequence belongs to the GatB/GatE family. GatB subfamily. Heterotrimer of A, B and C subunits.

It catalyses the reaction L-glutamyl-tRNA(Gln) + L-glutamine + ATP + H2O = L-glutaminyl-tRNA(Gln) + L-glutamate + ADP + phosphate + H(+). The catalysed reaction is L-aspartyl-tRNA(Asn) + L-glutamine + ATP + H2O = L-asparaginyl-tRNA(Asn) + L-glutamate + ADP + phosphate + 2 H(+). Functionally, allows the formation of correctly charged Asn-tRNA(Asn) or Gln-tRNA(Gln) through the transamidation of misacylated Asp-tRNA(Asn) or Glu-tRNA(Gln) in organisms which lack either or both of asparaginyl-tRNA or glutaminyl-tRNA synthetases. The reaction takes place in the presence of glutamine and ATP through an activated phospho-Asp-tRNA(Asn) or phospho-Glu-tRNA(Gln). This is Aspartyl/glutamyl-tRNA(Asn/Gln) amidotransferase subunit B from Streptococcus pyogenes serotype M12 (strain MGAS2096).